A 400-amino-acid chain; its full sequence is Nicotinate phosphoribosyltransferase (400 aa).

Histidine 220 carries the post-translational modification Phosphohistidine; by autocatalysis.

It belongs to the NAPRTase family. Transiently phosphorylated on a His residue during the reaction cycle. Phosphorylation strongly increases the affinity for substrates and increases the rate of nicotinate D-ribonucleotide production. Dephosphorylation regenerates the low-affinity form of the enzyme, leading to product release.

It carries out the reaction nicotinate + 5-phospho-alpha-D-ribose 1-diphosphate + ATP + H2O = nicotinate beta-D-ribonucleotide + ADP + phosphate + diphosphate. The protein operates within cofactor biosynthesis; NAD(+) biosynthesis; nicotinate D-ribonucleotide from nicotinate: step 1/1. Its function is as follows. Catalyzes the synthesis of beta-nicotinate D-ribonucleotide from nicotinate and 5-phospho-D-ribose 1-phosphate at the expense of ATP. The chain is Nicotinate phosphoribosyltransferase from Salmonella newport (strain SL254).